A 194-amino-acid chain; its full sequence is ATP-dependent Clp protease proteolytic subunit (194 aa).

Serine 98 (nucleophile) is an active-site residue. Histidine 123 is an active-site residue.

It belongs to the peptidase S14 family. Fourteen ClpP subunits assemble into 2 heptameric rings which stack back to back to give a disk-like structure with a central cavity, resembling the structure of eukaryotic proteasomes.

It localises to the cytoplasm. The enzyme catalyses Hydrolysis of proteins to small peptides in the presence of ATP and magnesium. alpha-casein is the usual test substrate. In the absence of ATP, only oligopeptides shorter than five residues are hydrolyzed (such as succinyl-Leu-Tyr-|-NHMec, and Leu-Tyr-Leu-|-Tyr-Trp, in which cleavage of the -Tyr-|-Leu- and -Tyr-|-Trp bonds also occurs).. Functionally, cleaves peptides in various proteins in a process that requires ATP hydrolysis. Has a chymotrypsin-like activity. Plays a major role in the degradation of misfolded proteins. The polypeptide is ATP-dependent Clp protease proteolytic subunit (Clostridium tetani (strain Massachusetts / E88)).